We begin with the raw amino-acid sequence, 435 residues long: AP-2 complex subunit mu (435 aa).

Serine 45 bears the Phosphoserine mark. Threonine 156 carries the phosphothreonine modification. One can recognise an MHD domain in the interval 170 to 434 (RNELFLDVLE…IGRSGIYETR (265 aa)). Residues lysine 341, lysine 345, and lysine 354 each coordinate a 1,2-diacyl-sn-glycero-3-phospho-(1D-myo-inositol-3,4,5-trisphosphate).

This sequence belongs to the adaptor complexes medium subunit family. In terms of assembly, adaptor protein complex 2 (AP-2) is a heterotetramer composed of two large adaptins (alpha-type subunit AP2A1 or AP2A2 and beta-type subunit AP2B1), a medium adaptin (mu-type subunit AP2M1) and a small adaptin (sigma-type subunit AP2S1). Interacts with ATP6V1H and MEGF10. Interacts with EGFR and TTGN1. Interacts with F2R. Interacts with PIP5K1C; tyrosine phosphorylation of PIP5K1C weakens the interaction. Interacts with KIAA0319; required for clathrin-mediated endocytosis of KIAA0319. Interacts with DVL2 (via DEP domain). Interacts with KCNQ1; mediates estrogen-induced internalization via clathrin-coated vesicles. Interacts with P2RX4 (via internalization motif). Together with AP2A1 or AP2A2 and AP2B1, it interacts with ADAM10; this interaction facilitates ADAM10 endocytosis from the plasma membrane during long-term potentiation in hippocampal neurons. Probably interacts with ACE2 (via endocytic sorting signal motif); the interaction is inhibited by ACE2 phosphorylation. Interacts with RALBP1; the interaction is direct. Interacts with TMEM106B (via N-terminus). Phosphorylation at Thr-156 increases the affinity of the AP-2 complex for cargo membrane proteins during the initial stages of endocytosis.

It is found in the cell membrane. The protein localises to the membrane. It localises to the coated pit. Functionally, component of the adaptor protein complex 2 (AP-2). Adaptor protein complexes function in protein transport via transport vesicles in different membrane traffic pathways. Adaptor protein complexes are vesicle coat components and appear to be involved in cargo selection and vesicle formation. AP-2 is involved in clathrin-dependent endocytosis in which cargo proteins are incorporated into vesicles surrounded by clathrin (clathrin-coated vesicles, CCVs) which are destined for fusion with the early endosome. The clathrin lattice serves as a mechanical scaffold but is itself unable to bind directly to membrane components. Clathrin-associated adaptor protein (AP) complexes which can bind directly to both the clathrin lattice and to the lipid and protein components of membranes are considered to be the major clathrin adaptors contributing the CCV formation. AP-2 also serves as a cargo receptor to selectively sort the membrane proteins involved in receptor-mediated endocytosis. AP-2 seems to play a role in the recycling of synaptic vesicle membranes from the presynaptic surface. AP-2 recognizes Y-X-X-[FILMV] (Y-X-X-Phi) and [ED]-X-X-X-L-[LI] endocytosis signal motifs within the cytosolic tails of transmembrane cargo molecules. AP-2 may also play a role in maintaining normal post-endocytic trafficking through the ARF6-regulated, non-clathrin pathway. During long-term potentiation in hippocampal neurons, AP-2 is responsible for the endocytosis of ADAM10. The AP-2 mu subunit binds to transmembrane cargo proteins; it recognizes the Y-X-X-Phi motifs. The surface region interacting with to the Y-X-X-Phi motif is inaccessible in cytosolic AP-2, but becomes accessible through a conformational change following phosphorylation of AP-2 mu subunit at Thr-156 in membrane-associated AP-2. The membrane-specific phosphorylation event appears to involve assembled clathrin which activates the AP-2 mu kinase AAK1. Plays a role in endocytosis of frizzled family members upon Wnt signaling. This Bos taurus (Bovine) protein is AP-2 complex subunit mu (AP2M1).